Reading from the N-terminus, the 178-residue chain is MPKAKGKTRRQKFGYSVNRKRLNRNARRKAAPRIECSHIRHAWDHAKSVRQNLAEMGLAVDPNRAVPLRKRKVKAMEVDIEERPKELVRKPYVLNDLEAEASLPEKKGNTLSRDLIDYVRYMVENHGEDYKAMARDEKNYYQDTPKQIRSKINVYKRFYPAEWQDFLDSLQKRKMEVE.

A disordered region spans residues 1 to 31 (MPKAKGKTRRQKFGYSVNRKRLNRNARRKAA). Thr-8 carries the phosphothreonine modification. Ser-16 is subject to Phosphoserine. Lys-74 participates in a covalent cross-link: Glycyl lysine isopeptide (Lys-Gly) (interchain with G-Cter in SUMO2). Lys-90 carries the post-translational modification N6-acetyllysine. Thr-144 carries the phosphothreonine modification. Residues Phe-166, Leu-167, Lys-172, and Arg-173 each participate in a glycyl lysine isopeptide (Lys-Gly) (interchain with G-Cter in SUMO2) cross-link.

The protein belongs to the NOP16 family.

The protein localises to the nucleus. It localises to the nucleolus. The chain is Nucleolar protein 16 (NOP16) from Homo sapiens (Human).